A 184-amino-acid polypeptide reads, in one-letter code: Photosystem I assembly protein Ycf4 (184 aa).

2 helical membrane passes run 21-43 (NFFW…ISSY) and 58-78 (LFVP…FISS).

Belongs to the Ycf4 family.

It is found in the plastid. It localises to the chloroplast thylakoid membrane. Seems to be required for the assembly of the photosystem I complex. The polypeptide is Photosystem I assembly protein Ycf4 (Pinus thunbergii (Japanese black pine)).